A 100-amino-acid polypeptide reads, in one-letter code: NAD(P)H-quinone oxidoreductase subunit 4L, chloroplastic (100 aa).

3 helical membrane-spanning segments follow: residues 1 to 21 (MIENALILGAYLFCIGFYGLI), 29 to 49 (ALMCLELIFNAVNINFVTFSN), and 63 to 83 (ISVIAIAAAEAAIGLSIILII).

The protein belongs to the complex I subunit 4L family. As to quaternary structure, NDH is composed of at least 16 different subunits, 5 of which are encoded in the nucleus.

The protein localises to the plastid. It is found in the chloroplast thylakoid membrane. The enzyme catalyses a plastoquinone + NADH + (n+1) H(+)(in) = a plastoquinol + NAD(+) + n H(+)(out). It carries out the reaction a plastoquinone + NADPH + (n+1) H(+)(in) = a plastoquinol + NADP(+) + n H(+)(out). NDH shuttles electrons from NAD(P)H:plastoquinone, via FMN and iron-sulfur (Fe-S) centers, to quinones in the photosynthetic chain and possibly in a chloroplast respiratory chain. The immediate electron acceptor for the enzyme in this species is believed to be plastoquinone. Couples the redox reaction to proton translocation, and thus conserves the redox energy in a proton gradient. The sequence is that of NAD(P)H-quinone oxidoreductase subunit 4L, chloroplastic from Angiopteris evecta (Mule's foot fern).